The primary structure comprises 407 residues: Indoleamine 2,3-dioxygenase 2 (407 aa).

His-347 is a binding site for heme.

This sequence belongs to the indoleamine 2,3-dioxygenase family. Heme serves as cofactor. In terms of tissue distribution, detected in liver, small intestine, spleen, placenta, thymus, lung, brain, kidney, and colon. Also expressed at low level in testis and thyroid. Not expressed in the majority of human tumor samples (&gt;99%).

It carries out the reaction L-tryptophan + O2 = N-formyl-L-kynurenine. It functions in the pathway amino-acid degradation; L-tryptophan degradation via kynurenine pathway; L-kynurenine from L-tryptophan: step 1/2. With respect to regulation, activity is inhibited by D-1MT (1-methyl-D-tryptophan) and MTH-trp (methylthiohydantoin-DL-tryptophan) but not L-1MT (1-methyl-L-tryptophan). In terms of biological role, catalyzes the first and rate limiting step of the catabolism of the essential amino acid tryptophan along the kynurenine pathway. Involved in immune regulation. May not play a significant role in tryptophan-related tumoral resistance. This Homo sapiens (Human) protein is Indoleamine 2,3-dioxygenase 2.